The chain runs to 152 residues: SsrA-binding protein (152 aa).

It belongs to the SmpB family.

Its subcellular location is the cytoplasm. Required for rescue of stalled ribosomes mediated by trans-translation. Binds to transfer-messenger RNA (tmRNA), required for stable association of tmRNA with ribosomes. tmRNA and SmpB together mimic tRNA shape, replacing the anticodon stem-loop with SmpB. tmRNA is encoded by the ssrA gene; the 2 termini fold to resemble tRNA(Ala) and it encodes a 'tag peptide', a short internal open reading frame. During trans-translation Ala-aminoacylated tmRNA acts like a tRNA, entering the A-site of stalled ribosomes, displacing the stalled mRNA. The ribosome then switches to translate the ORF on the tmRNA; the nascent peptide is terminated with the 'tag peptide' encoded by the tmRNA and targeted for degradation. The ribosome is freed to recommence translation, which seems to be the essential function of trans-translation. This Helicobacter acinonychis (strain Sheeba) protein is SsrA-binding protein.